Reading from the N-terminus, the 780-residue chain is ATP-dependent 6-phosphofructokinase, muscle type (780 aa).

The residue at position 2 (threonine 2) is an N-acetylthreonine. The tract at residues 2-390 (THEEHHAART…NWEVYKLLAH (389 aa)) is N-terminal catalytic PFK domain 1. Residues glycine 25, 88-89 (RC), and 118-121 (GDGS) each bind ATP. Aspartate 119 serves as a coordination point for Mg(2+). The residue at position 133 (serine 133) is a Phosphoserine. Substrate contacts are provided by residues 164–166 (SID), arginine 201, 208–210 (MGR), glutamate 264, arginine 292, and 298–301 (HVQR). Aspartate 166 acts as the Proton acceptor in catalysis. Serine 377 carries the post-translational modification Phosphoserine. An interdomain linker region spans residues 391-401 (IRPPAPKSGSY). The interval 402–780 (TVAVMNVGAP…SRKRSGEATV (379 aa)) is C-terminal regulatory PFK domain 2. Beta-D-fructose 2,6-bisphosphate is bound by residues arginine 471 and 528-532 (TVSNN). A glycan (O-linked (GlcNAc) serine) is linked at serine 530. Residue lysine 557 is modified to N6-(2-hydroxyisobutyryl)lysine. Residues arginine 566, 573 to 575 (MGG), glutamate 629, arginine 655, and 661 to 664 (HMQQ) contribute to the beta-D-fructose 2,6-bisphosphate site. Serine 667 is subject to Phosphoserine. Arginine 735 lines the beta-D-fructose 2,6-bisphosphate pocket. Serine 775 is modified (phosphoserine; by PKA).

Belongs to the phosphofructokinase type A (PFKA) family. ATP-dependent PFK group I subfamily. Eukaryotic two domain clade 'E' sub-subfamily. Homo- and heterotetramers. Phosphofructokinase (PFK) enzyme functions as a tetramer composed of different combinations of 3 types of subunits, called PFKM (M), PFKL (L) and PFKP (P). The composition of the PFK tetramer differs according to the tissue type it is present in. The kinetic and regulatory properties of the tetrameric enzyme are dependent on the subunit composition, hence can vary across tissues. Interacts (via C-terminus) with HK1 (via N-terminal spermatogenic cell-specific region). Mg(2+) serves as cofactor. Post-translationally, glcNAcylation decreases enzyme activity.

Its subcellular location is the cytoplasm. The enzyme catalyses beta-D-fructose 6-phosphate + ATP = beta-D-fructose 1,6-bisphosphate + ADP + H(+). It participates in carbohydrate degradation; glycolysis; D-glyceraldehyde 3-phosphate and glycerone phosphate from D-glucose: step 3/4. Allosterically activated by ADP, AMP, or fructose 2,6-bisphosphate, and allosterically inhibited by ATP or citrate. Its function is as follows. Catalyzes the phosphorylation of D-fructose 6-phosphate to fructose 1,6-bisphosphate by ATP, the first committing step of glycolysis. The chain is ATP-dependent 6-phosphofructokinase, muscle type (PFKM) from Oryctolagus cuniculus (Rabbit).